A 244-amino-acid chain; its full sequence is 3-oxoacyl-[acyl-carrier-protein] reductase FabG (244 aa).

Residues 12–15 (GANQ) and T37 contribute to the NADP(+) site. K50 and G53 together coordinate Ca(2+). NADP(+)-binding positions include 59-60 (DL) and N86. Substrate is bound at residue S138. N145 provides a ligand contact to Ca(2+). The active-site Proton acceptor is Y151. NADP(+) is bound by residues 151–155 (YSASK) and I184. Ca(2+) is bound by residues Q233 and T234.

The protein belongs to the short-chain dehydrogenases/reductases (SDR) family. As to quaternary structure, homotetramer.

It carries out the reaction a (3R)-hydroxyacyl-[ACP] + NADP(+) = a 3-oxoacyl-[ACP] + NADPH + H(+). The protein operates within lipid metabolism; fatty acid biosynthesis. Its function is as follows. Catalyzes the NADPH-dependent reduction of beta-ketoacyl-ACP substrates to beta-hydroxyacyl-ACP products, the first reductive step in the elongation cycle of fatty acid biosynthesis. This is 3-oxoacyl-[acyl-carrier-protein] reductase FabG (fabG) from Buchnera aphidicola subsp. Schizaphis graminum (strain Sg).